Reading from the N-terminus, the 445-residue chain is mRNA cleavage and polyadenylation factor CLP1 (445 aa).

Residues D33, K72, and 133-138 (QTGKTS) contribute to the ATP site.

The protein belongs to the Clp1 family. Clp1 subfamily. Component of the cleavage factor IA (CF IA) complex, which is a heterohexameric complex with 2:2:1:1 stoichiometry of RNA14, RNA15, PCF11 and CLP1. It contains 2 copies of an RNA14-RNA15 dimer and 1 copy of CLP1-PCF11. The complex interacts with the cleavage factor HRB1/CF IB to form the cleavage factor I (CF I) complex, and binds to RNA. Interacts directly with PCF11. Interacts with the CPF components CFT1, PTA1, PFS2, YSH1 and SSU72.

It localises to the nucleus. Component of the cleavage factor IA (CF IA) complex, which is involved in the endonucleolytic cleavage during polyadenylation-dependent pre-mRNA 3'-end formation. Associates with HRB1/CF IB to form the cleavage factor I (CF I) complex. CF I is required for correct positioning of a larger protein complex, the cleavage and polyadenylation factor (CPF) complex, which contains the catalytic subunits executing mRNA cleavage and polyadenylation. CLP1 mediates interactions between CF IA and CPF factors. CLP1 is also involved in maintaining the CF IA interaction with the C-terminal domain of RNA Pol II largest subunit via PCF11, which links pre-mRNA 3'-end processing to transcription termination. The sequence is that of mRNA cleavage and polyadenylation factor CLP1 from Saccharomyces cerevisiae (strain YJM789) (Baker's yeast).